Reading from the N-terminus, the 388-residue chain is MNINTMNKHTTNLNIIKNINNINNLNSIKELLLLLNNKRLNRSLNKTYIWDYLNELSNKGVKLQHLNNINSWSSQIYKFNKTEEINNTIYDRLVTKLLTKLLVLNINNKIYKLIISKPIFEHSINKVNIKFFYYLSYKNINKNINNNNNLINNIYSNYKFNINSKLINLLNNNINSISNILSLYYNKDVSFEPIQLKYNYMNSDILAKSLKIMNSSSKRSLSMNRIKNLMNNMPKLNDKLISQTYINNINNIMFNKYNNIIKSINNNNNNNPADSSPGNPRGGAAGKLYNIIYENNNINTIPNNILMFKYLVGWSIQLKGRLSNNKSISRSNTMNILNGTFQNYKYIWGNQMVNNYKLNYIPVNHNITNISDVNKNGKYNIKVKLNTI.

Belongs to the universal ribosomal protein uS3 family.

It is found in the mitochondrion. In terms of biological role, essential for mitochondrial protein synthesis and required for the maturation of small ribosomal subunits. The sequence is that of Small ribosomal subunit protein uS3m (VAR1) from Kluyveromyces lactis (strain ATCC 8585 / CBS 2359 / DSM 70799 / NBRC 1267 / NRRL Y-1140 / WM37) (Yeast).